The primary structure comprises 132 residues: Fatty acid-binding protein 12 (132 aa).

Residues Arg107 and 127-129 (RTY) each bind a fatty acid.

This sequence belongs to the calycin superfamily. Fatty-acid binding protein (FABP) family. Highly expressed in adult retina and testis with lower levels in cerebral cortex, kidney and epididymis. In the retina, strongly expressed in the ganglion cell layer and throughout the inner nuclear layer in amacrine and bipolar cells. Not expressed in the outer nuclear layer. In the testis, detected in the seminiferous tubules.

Functionally, may play a role in lipid transport. This Rattus norvegicus (Rat) protein is Fatty acid-binding protein 12.